Here is a 161-residue protein sequence, read N- to C-terminus: MRMSAKAEYAVRAMVQLATAASGTVVKTDDLAAAQGIPPQFLVDILTNLRTDRLVRSHRGREGGYELARPGTEISIADVLRCIDGPLASVRDIGLGDLPYSGPTTALTDVWRALRASMRSVLEETTLADVAGGALPEHVAQLADDYRAQESTRHGASRHGD.

Positions 2-132 constitute an HTH rrf2-type domain; it reads RMSAKAEYAV…EETTLADVAG (131 aa).

In Mycobacterium tuberculosis (strain CDC 1551 / Oshkosh), this protein is Putative HTH-type transcriptional regulator MT1325.